A 276-amino-acid chain; its full sequence is uncharacterized protein (276 aa).

The N-terminal stretch at 1–19 (MKKWLICSFVLVLLVSFTA) is a signal peptide. Residue Cys-20 is the site of N-palmitoyl cysteine attachment. The S-diacylglycerol cysteine moiety is linked to residue Cys-20.

Belongs to the NlpA lipoprotein family.

The protein localises to the cell membrane. This is an uncharacterized protein from Bacillus subtilis (strain 168).